Reading from the N-terminus, the 49-residue chain is Light-harvesting protein B-875 beta chain (49 aa).

Over 2–27 (ADKSDLGYTGLTDEQAQELHSVYMSG) the chain is Cytoplasmic. A bacteriochlorophyll contacts are provided by His-21 and His-39. Residues 28 to 45 (LWPFSAVAIVAHLAVYIW) traverse the membrane as a helical; Signal-anchor for type II membrane protein segment. The Periplasmic segment spans residues 46-49 (RPWF).

The protein belongs to the antenna complex beta subunit family. In terms of assembly, the core complex is formed by different alpha and beta chains, binding bacteriochlorophyll molecules, and arranged most probably in tetrameric structures disposed around the reaction center. The non-pigmented gamma chains may constitute additional components.

Its subcellular location is the cell inner membrane. Antenna complexes are light-harvesting systems, which transfer the excitation energy to the reaction centers. The protein is Light-harvesting protein B-875 beta chain (pufB) of Cereibacter sphaeroides (Rhodobacter sphaeroides).